The following is a 479-amino-acid chain: Xylose isomerase (479 aa).

H144 is a catalytic residue. The Mn(2+) site is built by E275, E311, H314, D339, D350, D352, and Y382.

The protein belongs to the xylose isomerase family. In terms of assembly, homodimer. Requires Mn(2+) as cofactor.

It catalyses the reaction alpha-D-xylose = alpha-D-xylulofuranose. This chain is Xylose isomerase (XYLA), found in Hordeum vulgare (Barley).